A 299-amino-acid chain; its full sequence is MIRKEKFGDEILKAHILVEALPYIKKFSGKTVVIKYGGSAMLDCNLKKMVMQDVVLMKFVGLNPVIVHGGGPEISSFLKKLGIESKFVNGLRVTDEKTAEIVEMVLVGKINKEIVSMINELGGMAVGISGKDGKLLKAEKDLSNGDLGYVGKIVEVNIEVIEMLIDRGYIPVIAPVSFGDDGKTYNVNADTAAGKIAEALKAEKLILLTDVEGVLENVEDKTSLISRMDLEHAKKLMDSGRINGGMIPKLKCCIKAVENGVKRAHIIDGRLTHSLLLEIFTDEGIGTMIGKECFDDDNL.

Substrate-binding positions include 70–71, Arg-92, and Asn-186; that span reads GG.

This sequence belongs to the acetylglutamate kinase family. ArgB subfamily.

It is found in the cytoplasm. The enzyme catalyses N-acetyl-L-glutamate + ATP = N-acetyl-L-glutamyl 5-phosphate + ADP. The protein operates within amino-acid biosynthesis; L-arginine biosynthesis; N(2)-acetyl-L-ornithine from L-glutamate: step 2/4. In terms of biological role, catalyzes the ATP-dependent phosphorylation of N-acetyl-L-glutamate. In Caldanaerobacter subterraneus subsp. tengcongensis (strain DSM 15242 / JCM 11007 / NBRC 100824 / MB4) (Thermoanaerobacter tengcongensis), this protein is Acetylglutamate kinase.